The primary structure comprises 100 residues: MQVLVRDNNVDQALKALKKKMQREGIFREMKLRGHYEKPSEKKAREKAEAVRRARKLARKKLQREGLLPMKPKPAFGADRGRPGAAGAGAGAGAGPRGPR.

Residues 37–52 are compositionally biased toward basic and acidic residues; it reads EKPSEKKAREKAEAVR. The tract at residues 37–100 is disordered; it reads EKPSEKKARE…GAGAGPRGPR (64 aa). A compositionally biased stretch (basic residues) spans 53–62; sequence RARKLARKKL. The segment covering 84 to 100 has biased composition (gly residues); it reads GAAGAGAGAGAGPRGPR.

The protein belongs to the bacterial ribosomal protein bS21 family.

This Rhodopseudomonas palustris (strain BisB5) protein is Small ribosomal subunit protein bS21.